The primary structure comprises 130 residues: Small ribosomal subunit protein uS11 (130 aa).

The protein belongs to the universal ribosomal protein uS11 family. As to quaternary structure, part of the 30S ribosomal subunit. Interacts with proteins S7 and S18. Binds to IF-3.

Its function is as follows. Located on the platform of the 30S subunit, it bridges several disparate RNA helices of the 16S rRNA. Forms part of the Shine-Dalgarno cleft in the 70S ribosome. In Thermotoga maritima (strain ATCC 43589 / DSM 3109 / JCM 10099 / NBRC 100826 / MSB8), this protein is Small ribosomal subunit protein uS11.